The sequence spans 881 residues: Probable inorganic carbon transporter subunit DabA (881 aa).

Positions 399, 401, 585, and 600 each coordinate Zn(2+).

The protein belongs to the inorganic carbon transporter (TC 9.A.2) DabA family. Forms a complex with DabB. Requires Zn(2+) as cofactor.

The protein resides in the cell membrane. Part of an energy-coupled inorganic carbon pump. This Geobacillus sp. (strain WCH70) protein is Probable inorganic carbon transporter subunit DabA.